The chain runs to 459 residues: DnaJ protein homolog XDJ1 (459 aa).

One can recognise a J domain in the interval 7 to 79 (GDRLYDVLGV…KSHYDLYGDD (73 aa)). The CR-type zinc finger occupies 146-240 (GKKLKFDLKR…CAGLGLLSKK (95 aa)). 4 CXXCXGXG motif repeats span residues 159-166 (CIKCHGSG), 181-188 (CESCAGKG), 208-215 (CEKCNGKG), and 228-235 (CPDCAGLG).

Its subcellular location is the mitochondrion outer membrane. In Saccharomyces cerevisiae (strain ATCC 204508 / S288c) (Baker's yeast), this protein is DnaJ protein homolog XDJ1 (XDJ1).